A 484-amino-acid polypeptide reads, in one-letter code: Protein nucleotidyltransferase YdiU (484 aa).

Positions 81, 83, 84, 103, 115, 116, 166, and 173 each coordinate ATP. Asp244 acts as the Proton acceptor in catalysis. Residues Asn245 and Asp254 each coordinate Mg(2+). Asp254 is a binding site for ATP.

This sequence belongs to the SELO family. Mg(2+) is required as a cofactor. It depends on Mn(2+) as a cofactor.

It carries out the reaction L-seryl-[protein] + ATP = 3-O-(5'-adenylyl)-L-seryl-[protein] + diphosphate. It catalyses the reaction L-threonyl-[protein] + ATP = 3-O-(5'-adenylyl)-L-threonyl-[protein] + diphosphate. The enzyme catalyses L-tyrosyl-[protein] + ATP = O-(5'-adenylyl)-L-tyrosyl-[protein] + diphosphate. The catalysed reaction is L-histidyl-[protein] + UTP = N(tele)-(5'-uridylyl)-L-histidyl-[protein] + diphosphate. It carries out the reaction L-seryl-[protein] + UTP = O-(5'-uridylyl)-L-seryl-[protein] + diphosphate. It catalyses the reaction L-tyrosyl-[protein] + UTP = O-(5'-uridylyl)-L-tyrosyl-[protein] + diphosphate. Functionally, nucleotidyltransferase involved in the post-translational modification of proteins. It can catalyze the addition of adenosine monophosphate (AMP) or uridine monophosphate (UMP) to a protein, resulting in modifications known as AMPylation and UMPylation. In Shewanella oneidensis (strain ATCC 700550 / JCM 31522 / CIP 106686 / LMG 19005 / NCIMB 14063 / MR-1), this protein is Protein nucleotidyltransferase YdiU.